The sequence spans 670 residues: tRNA 5-methylaminomethyl-2-thiouridine biosynthesis bifunctional protein MnmC (670 aa).

A tRNA (mnm(5)s(2)U34)-methyltransferase region spans residues 1–245; that stretch reads MKPIAIQPAS…KREMLTGALS (245 aa). The tract at residues 271–670 is FAD-dependent cmnm(5)s(2)U34 oxidoreductase; the sequence is VGGGIASALL…RKLLKGRAAS (400 aa).

It in the N-terminal section; belongs to the methyltransferase superfamily. tRNA (mnm(5)s(2)U34)-methyltransferase family. The protein in the C-terminal section; belongs to the DAO family. FAD serves as cofactor.

Its subcellular location is the cytoplasm. The catalysed reaction is 5-aminomethyl-2-thiouridine(34) in tRNA + S-adenosyl-L-methionine = 5-methylaminomethyl-2-thiouridine(34) in tRNA + S-adenosyl-L-homocysteine + H(+). Its function is as follows. Catalyzes the last two steps in the biosynthesis of 5-methylaminomethyl-2-thiouridine (mnm(5)s(2)U) at the wobble position (U34) in tRNA. Catalyzes the FAD-dependent demodification of cmnm(5)s(2)U34 to nm(5)s(2)U34, followed by the transfer of a methyl group from S-adenosyl-L-methionine to nm(5)s(2)U34, to form mnm(5)s(2)U34. The polypeptide is tRNA 5-methylaminomethyl-2-thiouridine biosynthesis bifunctional protein MnmC (Cronobacter sakazakii (strain ATCC BAA-894) (Enterobacter sakazakii)).